We begin with the raw amino-acid sequence, 177 residues long: UPF0114 protein HP_0189 (177 aa).

Helical transmembrane passes span 15–35 (WLLA…GYVF), 54–74 (LVLS…VLMV), and 145–165 (PIFW…LAAV).

This sequence belongs to the UPF0114 family.

It localises to the cell membrane. This is UPF0114 protein HP_0189 from Helicobacter pylori (strain ATCC 700392 / 26695) (Campylobacter pylori).